Here is a 249-residue protein sequence, read N- to C-terminus: Exosome complex component Rrp4 (249 aa).

Residues 72–143 (GDTIIGLVED…RTISPVLTVK (72 aa)) enclose the S1 motif domain. The 63-residue stretch at 151–213 (PLGTVMDIMP…EALIEAINII (63 aa)) folds into the KH domain.

Belongs to the RRP4 family. As to quaternary structure, component of the archaeal exosome complex. Forms a trimer of Rrp4 and/or Csl4 subunits. The trimer associates with a hexameric ring-like arrangement composed of 3 Rrp41-Rrp42 heterodimers.

It localises to the cytoplasm. Its function is as follows. Non-catalytic component of the exosome, which is a complex involved in RNA degradation. Increases the RNA binding and the efficiency of RNA degradation. Confers strong poly(A) specificity to the exosome. This chain is Exosome complex component Rrp4, found in Sulfolobus acidocaldarius (strain ATCC 33909 / DSM 639 / JCM 8929 / NBRC 15157 / NCIMB 11770).